Reading from the N-terminus, the 967-residue chain is Regulator of G-protein signaling 3 (967 aa).

Residues 18 to 95 (QITIRRGKDG…EIILLVWRVV (78 aa)) enclose the PDZ domain. The disordered stretch occupies residues 115-135 (THDLLSPPNKREKNCTHGAPT). R167 carries the post-translational modification Omega-N-methylarginine. Positions 389 to 705 (QLAATPTERK…EGGLSLRVQN (317 aa)) are disordered. 3 stretches are compositionally biased toward polar residues: residues 476-486 (LPSSKNPSPSQ), 512-549 (SPSSEDIATCQNPPQSPETSTSKDSPPGQGSSPTTEVP), and 577-597 (SSASDQNVLPSQESPPSQGSL). Over residues 650-676 (GEDEDAEEGEEGEEGEEDEEDDTNDDN) the composition is skewed to acidic residues. Residues 677-687 (YGDRNEAKRSS) are compositionally biased toward basic and acidic residues. S713, S716, S748, and S777 each carry phosphoserine. The tract at residues 807-830 (FRRRNESPGAQPAGKADKTTKSFK) is disordered. Residues 821-830 (KADKTTKSFK) show a composition bias toward basic and acidic residues. Positions 842 to 967 (SLEKLLLHKY…INQKKMSPPL (126 aa)) constitute an RGS domain.

Binds EFNB1 and EFNB2. Binds the GNB1-GNG2 heterodimer. Binds ESR1. Phosphorylated by cyclic GMP-dependent protein kinase. Post-translationally, ISGylated. Detected in kidney, uterus, ovary, heart, brain, spleen, lung and testis.

It is found in the cytoplasm. The protein resides in the membrane. Its subcellular location is the nucleus. Down-regulates signaling from heterotrimeric G-proteins by increasing the GTPase activity of the alpha subunits, thereby driving them into their inactive GDP-bound form. Down-regulates G-protein-mediated release of inositol phosphates and activation of MAP kinases. The chain is Regulator of G-protein signaling 3 (Rgs3) from Rattus norvegicus (Rat).